Consider the following 297-residue polypeptide: Probable endonuclease 4 (297 aa).

Positions 1–21 (MPEIGAHVSAAGGPQRAPERG) are disordered. Zn(2+)-binding residues include His67, His107, Glu145, Asp179, His182, His216, Asp229, His231, and Glu261.

The protein belongs to the AP endonuclease 2 family. Zn(2+) serves as cofactor.

The enzyme catalyses Endonucleolytic cleavage to 5'-phosphooligonucleotide end-products.. Functionally, endonuclease IV plays a role in DNA repair. It cleaves phosphodiester bonds at apurinic or apyrimidinic (AP) sites, generating a 3'-hydroxyl group and a 5'-terminal sugar phosphate. The protein is Probable endonuclease 4 of Halorhodospira halophila (strain DSM 244 / SL1) (Ectothiorhodospira halophila (strain DSM 244 / SL1)).